Here is a 289-residue protein sequence, read N- to C-terminus: 4-hydroxy-tetrahydrodipicolinate synthase (289 aa).

Thr-45 is a pyruvate binding site. Tyr-133 acts as the Proton donor/acceptor in catalysis. Residue Lys-161 is the Schiff-base intermediate with substrate of the active site. Residue Ile-200 coordinates pyruvate.

It belongs to the DapA family. Homotetramer; dimer of dimers.

The protein resides in the cytoplasm. The catalysed reaction is L-aspartate 4-semialdehyde + pyruvate = (2S,4S)-4-hydroxy-2,3,4,5-tetrahydrodipicolinate + H2O + H(+). Its pathway is amino-acid biosynthesis; L-lysine biosynthesis via DAP pathway; (S)-tetrahydrodipicolinate from L-aspartate: step 3/4. Catalyzes the condensation of (S)-aspartate-beta-semialdehyde [(S)-ASA] and pyruvate to 4-hydroxy-tetrahydrodipicolinate (HTPA). In Coxiella burnetii (strain Dugway 5J108-111), this protein is 4-hydroxy-tetrahydrodipicolinate synthase.